Reading from the N-terminus, the 340-residue chain is Major histocompatibility complex class I-related gene protein (340 aa).

A signal peptide spans M1–S22. Residues R23 to S109 are alpha-1. An antigen-binding cleft region spans residues R23–T201. Residues R23–M302 lie on the Extracellular side of the membrane. 2 residues coordinate 8-(9H-purin-6-yl)-2-oxa-8-azabicyclo[3.3.1]nona-3,6-diene-4,6-dicarbaldehyde: Y29 and R31. The 5-(2-oxoethylideneamino)-6-(D-ribitylamino)uracil site is built by R31, S46, and K65. 3 residues coordinate 5-(2-oxopropylideneamino)-6-(D-ribitylamino)uracil: R31, S46, and K65. Residues R31, S46, and K65 each coordinate 7-hydroxy-6-methyl-8-(1-D-ribityl)lumazine. 2 residues coordinate 8-(9H-purin-6-yl)-2-oxa-8-azabicyclo[3.3.1]nona-3,6-diene-4,6-dicarbaldehyde: K65 and H80. K65 lines the 2-amino-4-oxopteridine-6-carbaldehyde pocket. A pyridoxal-binding site is contributed by K65. N-linked (GlcNAc...) asparagine glycosylation is present at N107. Residues G110 to T201 form an alpha-2 region. R116 serves as a coordination point for 8-(9H-purin-6-yl)-2-oxa-8-azabicyclo[3.3.1]nona-3,6-diene-4,6-dicarbaldehyde. The 5-(2-oxoethylideneamino)-6-(D-ribitylamino)uracil site is built by R116, Y174, and Q175. Positions 116, 174, and 175 each coordinate 5-(2-oxopropylideneamino)-6-(D-ribitylamino)uracil. 7-hydroxy-6-methyl-8-(1-D-ribityl)lumazine-binding residues include R116, Y174, and Q175. Disulfide bonds link C120/C183 and C222/C278. An alpha-3 region spans residues E202 to Q293. The 80-residue stretch at P203–H282 folds into the Ig-like C1-type domain. The tract at residues E294 to M302 is connecting peptide. Residues K303 to W323 form a helical membrane-spanning segment. Topologically, residues R324–D340 are cytoplasmic.

The protein belongs to the MHC class I family. As to quaternary structure, heterotrimer that consists of MR1, B2M and metabolite antigen. Major classes of metabolite ligands presented by MR1 include riboflavin-related antigens, pyrimidines and ribityl lumazines, nucleobase adducts and folate derivatives. Forms reversible covalent Schiff base complexes with microbial pyrimidine-based metabolite, which serves as a molecular switch triggering complete folding, stable association with B2M and translocation of the ternary complex from endoplasmic reticulum to the plasma membrane. Alternatively, forms non-Schiff base complexes with ribityl lumazines. On antigen-presenting cells, the ternary complex interacts with TCR on MR1-restricted T cells. Interacts with TAPBP and TAPBPL chaperones in the endoplasmic reticulum. TAPBP associated or not with MHC class I peptide loading complex binds ligand-free MR1 or MR1-B2M complex, providing for stable MR1 pools ready for metabolite antigen processing. TAPBPL interacts with MR1 in a ligand-independent way; this interaction may stabilize MR1 pool and facilitate ligand loading and dissociation. Structurally, MR1-B2M heterodimer adopts a topology similar to classical MHC class I molecules, with alpha-1 and alpha-2 domains of MR1 forming the antigen-binding cleft composed of two alpha-helices resting on a floor of 7-stranded anti-parallel beta-pleated sheet. MR1-B2M heterodimer (via alpha-helices) interacts with TCR (via CDR domains). In terms of processing, N-glycosylated.

The protein resides in the cell membrane. Its subcellular location is the endoplasmic reticulum membrane. It localises to the golgi apparatus membrane. The protein localises to the early endosome membrane. It is found in the late endosome membrane. In terms of biological role, antigen-presenting molecule specialized in displaying microbial pyrimidine-based metabolites to alpha-beta T cell receptors (TCR) on innate-type mucosal-associated invariant T (MAIT) cells. In complex with B2M preferentially presents riboflavin-derived metabolites to semi-invariant TCRs on MAIT cells, guiding immune surveillance of the microbial metabolome at mucosal epithelial barriers. Signature pyrimidine-based microbial antigens are generated via non-enzymatic condensation of metabolite intermediates of the riboflavin pathway with by-products arising from other metabolic pathways such as glycolysis. Typical potent antigenic metabolites are 5-(2-oxoethylideneamino)-6-D-ribitylaminouracil (5-OE-RU) and 5-(2-oxopropylideneamino)-6-D-ribitylaminouracil (5-OP-RU), products of condensation of 5-amino-6-D-ribityaminouracil (5-A-RU) with glyoxal or methylglyoxal by-products, respectively. May present microbial antigens to various MAIT cell subsets, providing for unique recognition of diverse microbes, including pathogens that do not synthesize riboflavin. Upon antigen recognition, elicits rapid innate-type MAIT cell activation to eliminate pathogenic microbes by directly killing infected cells. During T cell development, drives thymic selection and post-thymic terminal differentiation of MAIT cells in a process dependent on commensal microflora. Acts as an immune sensor of cancer cell metabolome. May present a tumor-specific or -associated metabolite essential for cancer cell survival to a pan-cancer TCR on a non-MAIT CD8-positive T cell clone, triggering T cell-mediated killing of a wide range of cancer cell types. May present tumor-enriched pyridoxal and pyridoxal 5'-phosphate antigens, enabling preferential recognition of cancer cells. Presents nucleobase carbonyl adducts generated during oxidative stress. Captures M3Ade, a nucleobase adduct composed of one adenine modified by a malondialdehyde trimer, for recognition by MR1-restricted T cell clones expressing a polyclonal TCR repertoire. This is Major histocompatibility complex class I-related gene protein from Pongo pygmaeus (Bornean orangutan).